The sequence spans 355 residues: Peptide chain release factor 1 (355 aa).

Residue Gln-232 is modified to N5-methylglutamine.

Belongs to the prokaryotic/mitochondrial release factor family. In terms of processing, methylated by PrmC. Methylation increases the termination efficiency of RF1.

It is found in the cytoplasm. Peptide chain release factor 1 directs the termination of translation in response to the peptide chain termination codons UAG and UAA. The sequence is that of Peptide chain release factor 1 from Kineococcus radiotolerans (strain ATCC BAA-149 / DSM 14245 / SRS30216).